The sequence spans 616 residues: Chaperone protein HscA (616 aa).

It belongs to the heat shock protein 70 family.

Functionally, chaperone involved in the maturation of iron-sulfur cluster-containing proteins. Has a low intrinsic ATPase activity which is markedly stimulated by HscB. Involved in the maturation of IscU. The chain is Chaperone protein HscA from Escherichia coli O139:H28 (strain E24377A / ETEC).